We begin with the raw amino-acid sequence, 64 residues long: Protein DsrB (64 aa).

Belongs to the DsrB family.

This Salmonella enteritidis PT4 (strain P125109) protein is Protein DsrB.